Here is a 335-residue protein sequence, read N- to C-terminus: Capsular polysaccharide phosphotransferase WcwK (335 aa).

It belongs to the stealth family.

The sequence is that of Capsular polysaccharide phosphotransferase WcwK (wcwK) from Streptococcus pneumoniae.